Consider the following 171-residue polypeptide: AAF/I fimbrial subunit (171 aa).

Positions 1 to 28 (MKTLKNMRRKNLCITLGLVSLLSRGANA) are cleaved as a signal peptide.

Its subcellular location is the fimbrium. This Escherichia coli protein is AAF/I fimbrial subunit (aggA).